The sequence spans 226 residues: Putative ankyrin repeat protein RF_0939 (226 aa).

ANK repeat units lie at residues 56–86 (VSTT…NVNM), 91–120 (FKDT…AVNG), 125–154 (LLGP…AVDQ), and 157–194 (SGET…DTNA).

The polypeptide is Putative ankyrin repeat protein RF_0939 (Rickettsia felis (strain ATCC VR-1525 / URRWXCal2) (Rickettsia azadi)).